A 268-amino-acid chain; its full sequence is 4-hydroxy-tetrahydrodipicolinate reductase (268 aa).

Residues 8 to 13 (GAAGRM) and Asp35 contribute to the NAD(+) site. Residue Arg36 coordinates NADP(+). Residues 99–101 (GTT) and 123–126 (AANF) each bind NAD(+). His156 serves as the catalytic Proton donor/acceptor. His157 serves as a coordination point for (S)-2,3,4,5-tetrahydrodipicolinate. The active-site Proton donor is Lys160. Residue 166–167 (GT) participates in (S)-2,3,4,5-tetrahydrodipicolinate binding.

Belongs to the DapB family.

The protein localises to the cytoplasm. It carries out the reaction (S)-2,3,4,5-tetrahydrodipicolinate + NAD(+) + H2O = (2S,4S)-4-hydroxy-2,3,4,5-tetrahydrodipicolinate + NADH + H(+). It catalyses the reaction (S)-2,3,4,5-tetrahydrodipicolinate + NADP(+) + H2O = (2S,4S)-4-hydroxy-2,3,4,5-tetrahydrodipicolinate + NADPH + H(+). It participates in amino-acid biosynthesis; L-lysine biosynthesis via DAP pathway; (S)-tetrahydrodipicolinate from L-aspartate: step 4/4. Catalyzes the conversion of 4-hydroxy-tetrahydrodipicolinate (HTPA) to tetrahydrodipicolinate. This chain is 4-hydroxy-tetrahydrodipicolinate reductase, found in Pseudomonas aeruginosa (strain LESB58).